Consider the following 148-residue polypeptide: MPSRLRKTRKLRGHVSHGHGRIGKHRKHPGGRGNAGGLHHHRINFDKYHPGYFGKVGMKHYHLKRNQSFCPTVNLDKLWTLVSEQTRVNAAKNKTGAAPIIDVVRSGYYKVLGKGKLPKQPVIVKAKFFSRRAEEKIKSVGGACVLVG.

Over residues 1 to 30 the composition is skewed to basic residues; it reads MPSRLRKTRKLRGHVSHGHGRIGKHRKHPG. A disordered region spans residues 1–38; it reads MPSRLRKTRKLRGHVSHGHGRIGKHRKHPGGRGNAGGL. At His-39 the chain carries (3S)-3-hydroxyhistidine. Lys-47 and Lys-55 each carry N6-acetyllysine. A Phosphoserine modification is found at Ser-68. At Lys-110 the chain carries N6-acetyllysine.

It belongs to the universal ribosomal protein uL15 family. In terms of processing, hydroxylated on His-39 by MINA.

This Pan troglodytes (Chimpanzee) protein is Large ribosomal subunit protein uL15 (RPL27A).